The primary structure comprises 616 residues: Probable galacturonosyltransferase 4 (616 aa).

Topologically, residues 1 to 6 are cytoplasmic; sequence MMVKLR. Residues 7-29 traverse the membrane as a helical; Signal-anchor for type II membrane protein segment; the sequence is NLVLFFMLLTVVAHILLYTDPAA. The Lumenal segment spans residues 30 to 616; that stretch reads SFKTPFSKRD…VYLRECNINP (587 aa). The tract at residues 132–152 is disordered; the sequence is QTSEKVDEQPEPNAFGAKKDT. Residues Asn291, Asn326, Asn378, Asn481, and Asn514 are each glycosylated (N-linked (GlcNAc...) asparagine).

The protein belongs to the glycosyltransferase 8 family. Expressed in roots, inflorescences, siliques, leaves and stems.

It is found in the golgi apparatus membrane. The protein operates within glycan metabolism; pectin biosynthesis. May be involved in pectin and/or xylans biosynthesis in cell walls. The protein is Probable galacturonosyltransferase 4 (GAUT4) of Arabidopsis thaliana (Mouse-ear cress).